A 427-amino-acid polypeptide reads, in one-letter code: Inward rectifier potassium channel 2 (427 aa).

Topologically, residues 1-81 (MGSVRTNRYS…IFTTCVDIRW (81 aa)) are cytoplasmic. C76 carries the post-translational modification S-nitrosocysteine. A helical transmembrane segment spans residues 82–106 (RWMLVIFCLAFVLSWLFFGCVFWLI). Residues 107 to 128 (ALLHGDLDASKESKACVSEVNS) are Extracellular-facing. An intramembrane region (helical; Pore-forming) is located at residues 129-140 (FTAAFLFSIETQ). An intramembrane region (pore-forming) is located at residues 141 to 147 (TTIGYGF). Positions 142–147 (TIGYGF) match the Selectivity filter motif. The Extracellular segment spans residues 148 to 156 (RCVTDECPV). Residues 157–178 (AVFMVVFQSIVGCIIDAFIIGA) form a helical membrane-spanning segment. The Cytoplasmic portion of the chain corresponds to 179-427 (VMAKMAKPKK…PRPLRRESEI (249 aa)). Residues 181–208 (AKMAKPKKRNETLVFSHNAVIAMRDGKL) form a polyphosphoinositide (PIP2)-binding region. Positions 384–427 (SKEEDDSENGVPESTSTDTPPDIDLHNQASVPLEPRPLRRESEI) are disordered. The PDZ-binding signature appears at 425 to 427 (SEI).

It belongs to the inward rectifier-type potassium channel (TC 1.A.2.1) family. KCNJ2 subfamily. As to quaternary structure, homotetramer. Homomultimeric and heteromultimeric association with KCNJ4/Kir2.3. Can form heteromeric channels with Kir2.6/KCNJ18. Associates, via its PDZ-recognition domain, with a complex containing LIN7A, LIN7B, LIN7C, DLG1, CASK and APBA1. In terms of processing, S-nitrosylation increases the open probability and inward rectifying currents.

The protein localises to the cell membrane. It is found in the sarcolemma. Its subcellular location is the T-tubule. It carries out the reaction K(+)(in) = K(+)(out). Its activity is regulated as follows. Activated by phosphatidylinositol 4,5 biphosphate (PtdIns(4,5)P2). Its function is as follows. Inward rectifier potassium channels are characterized by a greater tendency to allow potassium to flow into the cell rather than out of it. Their voltage dependence is regulated by the concentration of extracellular potassium; as external potassium is raised, the voltage range of the channel opening shifts to more positive voltages. The inward rectification is mainly due to the blockage of outward current by internal magnesium. Can be blocked by extracellular barium and cesium. Probably participates in establishing action potential waveform and excitability of neuronal and muscle tissues. The protein is Inward rectifier potassium channel 2 (KCNJ2) of Bos taurus (Bovine).